A 129-amino-acid polypeptide reads, in one-letter code: Putative membrane protein insertion efficiency factor (129 aa).

The protein belongs to the UPF0161 family.

The protein resides in the cell inner membrane. Functionally, could be involved in insertion of integral membrane proteins into the membrane. This chain is Putative membrane protein insertion efficiency factor, found in Rhodopseudomonas palustris (strain ATCC BAA-98 / CGA009).